The sequence spans 647 residues: Protein INVOLVED IN DE NOVO 2 (647 aa).

Disordered stretches follow at residues 1-20 (MGSTVILSSDDEDSDISESE) and 101-123 (SASEAEPSSKRQKNGNPIQDCDH). Over residues 9-20 (SDDEDSDISESE) the composition is skewed to acidic residues. Residues 253-508 (IAELTEEEAR…NIMKEWNTNI (256 aa)) adopt a coiled-coil conformation.

In terms of assembly, interacts with FMD1/IDNL1. Forms a complex with FMD1/IDNL1 and FMD2/INDL2. Can form homodimers. Interacts with MORC6.

In terms of biological role, forms a complex with FDM1/IDNL1 and FDM2/IDNL2 that is required for RNA-directed DNA methylation (RdDM) and that functions at a downstream step of the RdDM pathway and downstream of small interfering RNA (siRNA) formation. Required for de novo DNA methylation, siRNA accumulation and siRNA-mediated maintenance methylation. Required for several post-transcriptional gene silencing pathways. Binds double-stranded RNAs (dsRNAs) with 5'-overhangs through its XS domain. Binds long non-coding RNA (lncRNA) in an AGO4-dependent manner and associates with DRM2, resulting in DNA methylation of RdDM target loci. Mediates the silencing of a subset of MORC6 target loci. In Arabidopsis thaliana (Mouse-ear cress), this protein is Protein INVOLVED IN DE NOVO 2.